Consider the following 470-residue polypeptide: Acetyl-CoA decarbonylase/synthase complex subunit gamma (470 aa).

The region spanning 1 to 62 (MKVKSPLEVY…DPKVKKKLEE (62 aa)) is the 4Fe-4S domain. Cys18, Cys21, Cys26, and Cys43 together coordinate [4Fe-4S] cluster.

As to quaternary structure, heterodimer of delta and gamma chains. The ACDS complex is made up of alpha, epsilon, beta, gamma and delta chains with a probable stoichiometry of (alpha(2)epsilon(2))(4)-beta(8)-(gamma(1)delta(1))(8). Corrinoid is required as a cofactor. It depends on [4Fe-4S] cluster as a cofactor.

It catalyses the reaction 5,6,7,8-tetrahydrosarcinapterin + methyl-Co(III)-[corrinoid Fe-S protein] = 5-methyltetrahydrosarcinapterin + Co(I)-[corrinoid Fe-S protein] + H(+). Its function is as follows. Part of a complex that catalyzes the reversible cleavage of acetyl-CoA, allowing autotrophic growth from CO(2). The chain is Acetyl-CoA decarbonylase/synthase complex subunit gamma from Archaeoglobus fulgidus (strain ATCC 49558 / DSM 4304 / JCM 9628 / NBRC 100126 / VC-16).